We begin with the raw amino-acid sequence, 397 residues long: Succinate--CoA ligase [ADP-forming] subunit beta (397 aa).

The 246-residue stretch at 9–254 (KALLAQYGAP…ETEEDPKELA (246 aa)) folds into the ATP-grasp domain. ATP is bound by residues Lys46, 53 to 55 (GRG), Glu109, Ser112, and Glu117. 2 residues coordinate Mg(2+): Asn209 and Asp223. Substrate contacts are provided by residues Asn274 and 331-333 (GIM).

It belongs to the succinate/malate CoA ligase beta subunit family. As to quaternary structure, heterotetramer of two alpha and two beta subunits. Mg(2+) serves as cofactor.

It carries out the reaction succinate + ATP + CoA = succinyl-CoA + ADP + phosphate. The enzyme catalyses GTP + succinate + CoA = succinyl-CoA + GDP + phosphate. It participates in carbohydrate metabolism; tricarboxylic acid cycle; succinate from succinyl-CoA (ligase route): step 1/1. Functionally, succinyl-CoA synthetase functions in the citric acid cycle (TCA), coupling the hydrolysis of succinyl-CoA to the synthesis of either ATP or GTP and thus represents the only step of substrate-level phosphorylation in the TCA. The beta subunit provides nucleotide specificity of the enzyme and binds the substrate succinate, while the binding sites for coenzyme A and phosphate are found in the alpha subunit. The sequence is that of Succinate--CoA ligase [ADP-forming] subunit beta from Jannaschia sp. (strain CCS1).